Here is a 333-residue protein sequence, read N- to C-terminus: MEKLTKIKHRIIPAKDSQNNSYKKVLKIKGLERGFGNTLAVALRRILLSNITGIAPFCVRIEGVEHEFTALEKVSEDIVTILSNLKKVVLNYDEDYVKDNQIIKLSLNANEDNRITSNHLTVTNAPRVEVQNKDVEIATLSKPGVLKLEMFLRAGRGYVDFEDNKKFIEEKEKELKELSSLSKGAFIAMDSVFSPVVNVAWKVTELNTASLKIEEQLELELETKLGVTPESAIKLACKILVAHFQTIGDLTDLDSDEIFQSEKQSLEKEEDDMEIRLLNLSMRSQNALAKSGIKTLNELASYPIEKLKEIKNLGEKSREEIIRKLNEYGKLKN.

Residues 1–251 (MEKLTKIKHR…AHFQTIGDLT (251 aa)) form an alpha N-terminal domain (alpha-NTD) region. The alpha C-terminal domain (alpha-CTD) stretch occupies residues 272–333 (DMEIRLLNLS…KLNEYGKLKN (62 aa)).

Belongs to the RNA polymerase alpha chain family. In terms of assembly, homodimer. The RNAP catalytic core consists of 2 alpha, 1 beta, 1 beta' and 1 omega subunit. When a sigma factor is associated with the core the holoenzyme is formed, which can initiate transcription.

It carries out the reaction RNA(n) + a ribonucleoside 5'-triphosphate = RNA(n+1) + diphosphate. Functionally, DNA-dependent RNA polymerase catalyzes the transcription of DNA into RNA using the four ribonucleoside triphosphates as substrates. In Mycoplasmopsis synoviae (strain 53) (Mycoplasma synoviae), this protein is DNA-directed RNA polymerase subunit alpha.